The chain runs to 198 residues: Lipid A 4'-phosphatase (198 aa).

A helical transmembrane segment spans residues 143–165 (AGQHTILQVTIGSLIAWGFAYLF).

This sequence belongs to the lipid A LpxF 4'-phosphatase family.

It localises to the cell inner membrane. It participates in bacterial outer membrane biogenesis; LPS lipid A biosynthesis. In terms of biological role, removes the 4'-phosphate group from tetra- and hexaacylated lipid A species, has no 1-phosphatase or Kdo hydrolase activity. Absence of the 4'-phosphate group renders the bacteria resistant to host-derived cationic antimicrobial peptides (CAMP), allowing it to camouflage itself from the host innate immune response, and plays a critical role in the long-term colonization of the host's stomach. The chain is Lipid A 4'-phosphatase from Helicobacter pylori (strain J99 / ATCC 700824) (Campylobacter pylori J99).